A 164-amino-acid polypeptide reads, in one-letter code: Large ribosomal subunit protein uL10 (164 aa).

Belongs to the universal ribosomal protein uL10 family. Part of the ribosomal stalk of the 50S ribosomal subunit. The N-terminus interacts with L11 and the large rRNA to form the base of the stalk. The C-terminus forms an elongated spine to which L12 dimers bind in a sequential fashion forming a multimeric L10(L12)X complex.

Its function is as follows. Forms part of the ribosomal stalk, playing a central role in the interaction of the ribosome with GTP-bound translation factors. The polypeptide is Large ribosomal subunit protein uL10 (Aliivibrio fischeri (strain MJ11) (Vibrio fischeri)).